The sequence spans 249 residues: Acetylglutamate kinase (249 aa).

Substrate-binding positions include 42 to 43 (GG), Arg-64, and Asn-155.

Belongs to the acetylglutamate kinase family. ArgB subfamily.

Its subcellular location is the cytoplasm. It catalyses the reaction N-acetyl-L-glutamate + ATP = N-acetyl-L-glutamyl 5-phosphate + ADP. It functions in the pathway amino-acid biosynthesis; L-arginine biosynthesis; N(2)-acetyl-L-ornithine from L-glutamate: step 2/4. Functionally, catalyzes the ATP-dependent phosphorylation of N-acetyl-L-glutamate. This chain is Acetylglutamate kinase, found in Endomicrobium trichonymphae.